A 418-amino-acid chain; its full sequence is Histidinol dehydrogenase (418 aa).

3 residues coordinate NAD(+): Y119, Q180, and N203. Positions 226, 248, and 251 each coordinate substrate. Q248 and H251 together coordinate Zn(2+). Residues E316 and H317 each act as proton acceptor in the active site. Residues H317, D350, E404, and H409 each contribute to the substrate site. Zn(2+) is bound at residue D350. H409 contacts Zn(2+).

Belongs to the histidinol dehydrogenase family. Zn(2+) serves as cofactor.

It catalyses the reaction L-histidinol + 2 NAD(+) + H2O = L-histidine + 2 NADH + 3 H(+). The protein operates within amino-acid biosynthesis; L-histidine biosynthesis; L-histidine from 5-phospho-alpha-D-ribose 1-diphosphate: step 9/9. Its function is as follows. Catalyzes the sequential NAD-dependent oxidations of L-histidinol to L-histidinaldehyde and then to L-histidine. The sequence is that of Histidinol dehydrogenase from Staphylococcus aureus (strain MRSA252).